Reading from the N-terminus, the 240-residue chain is Homeobox protein notochord (240 aa).

The segment covering 1 to 13 (MSSPAPSGTQVQP) has biased composition (polar residues). 2 disordered regions span residues 1–21 (MSSP…PCPG) and 208–240 (QKLK…GIGS). The segment at residues 149–208 (TKRVRTTFNLQQLQELEKVFAKQHNLVGKERAQLAARLHLTENQVRIWFQNRRVKYQKQQ) is a DNA-binding region (homeobox). Positions 213 to 225 (PSSSVMEEPSSSS) are enriched in low complexity.

It is found in the nucleus. In terms of biological role, transcription factor that controls node morphogenesis. Acts downstream of both FOXA2 and Brachyury (T) during notochord development. Is essential for cilia formation in the posterior notochord (PNC) and for left-right patterning; acts upstream of FOXJ1 and RFX3 in this process and is required for the expression of various components important for axonemal assembly and function. Plays a role in regulating axial versus paraxial cell fate. Activates the transcription of ciliary proteins C11orf97 homolog, FAM183B and SPACA9 in the embryonic ventral node. This chain is Homeobox protein notochord (Noto), found in Mus musculus (Mouse).